Consider the following 220-residue polypeptide: Pro-Pro endopeptidase (220 aa).

An N-terminal signal peptide occupies residues 1-26 (MRPSKKLLIAIISIFLISSVPVSAHA). One can recognise an ATLF-like domain in the interval 35–220 (KDTLSQIVVF…TYSFLQNLAK (186 aa)). Interacts with substrate peptide regions lie at residues 101-103 (KGW) and 117-119 (GGS). A Zn(2+)-binding site is contributed by His-142. Glu-143 serves as the catalytic Proton acceptor. Residues His-146, Tyr-178, and Glu-185 each contribute to the Zn(2+) site.

It belongs to the peptidase M34 family. Pro-Pro endopeptidase subfamily. In terms of assembly, monomer. The cofactor is Zn(2+).

The protein resides in the secreted. The catalysed reaction is The enzyme catalyzes the hydrolytic cleavage of peptide bonds between two proline residues.. Its activity is regulated as follows. Is inhibited by the chelating agent o-phenanthroline in vitro. Its function is as follows. Zinc-dependent endoprotease with a unique preference for proline residues surrounding the scissile bond. Exhibits a high preference for an asparagine at the P2 position and hydrophobic residues (Val, Ile, Leu) at the P3 position. Efficiently cleaves the LPXTG cell surface proteins CD630_28310 and CD630_32460 at multiple cleavage sites in vivo. Has a role in the regulation of C.difficile adhesion versus motility by cleaving surface adhesion proteins such as the collagen binding protein CD630_28310, and is important for efficient infection. Is also able to cleave fibronectin and fibrinogen in vitro; cleaves at the N-terminus of the beta-chain of fibrinogen. Destabilizes the fibronectin network produced by human fibroblasts. Therefore, may be important in key steps of clostridial pathogenesis by degrading extracellular matrix components associated with the gut epithelial cells. To a lesser extent, IgA1, IgA2, and human HSP 90-beta, but not HSP 90-alpha, are also substrates for the enzyme. Is not active on different collagen types, casein and gelatin. In Clostridioides difficile (strain 630) (Peptoclostridium difficile), this protein is Pro-Pro endopeptidase.